The following is a 729-amino-acid chain: Fatty acid oxidation complex subunit alpha (729 aa).

An enoyl-CoA hydratase/isomerase region spans residues 1–189 (MLYKGDTLYL…KIGLVDGVVK (189 aa)). Residue aspartate 296 coordinates substrate. The segment at 311-729 (ETPKQAAVLG…ARPVGDLKTA (419 aa)) is 3-hydroxyacyl-CoA dehydrogenase. Residues methionine 324, aspartate 343, 400–402 (VVE), lysine 407, and serine 429 contribute to the NAD(+) site. Histidine 450 functions as the For 3-hydroxyacyl-CoA dehydrogenase activity in the catalytic mechanism. Asparagine 453 serves as a coordination point for NAD(+). Residues asparagine 500 and tyrosine 660 each contribute to the substrate site. Residues 708-729 (RHNEPYYPPVEPARPVGDLKTA) are disordered.

The protein in the N-terminal section; belongs to the enoyl-CoA hydratase/isomerase family. This sequence in the C-terminal section; belongs to the 3-hydroxyacyl-CoA dehydrogenase family. As to quaternary structure, heterotetramer of two alpha chains (FadB) and two beta chains (FadA).

It carries out the reaction a (3S)-3-hydroxyacyl-CoA + NAD(+) = a 3-oxoacyl-CoA + NADH + H(+). It catalyses the reaction a (3S)-3-hydroxyacyl-CoA = a (2E)-enoyl-CoA + H2O. The enzyme catalyses a 4-saturated-(3S)-3-hydroxyacyl-CoA = a (3E)-enoyl-CoA + H2O. The catalysed reaction is (3S)-3-hydroxybutanoyl-CoA = (3R)-3-hydroxybutanoyl-CoA. It carries out the reaction a (3Z)-enoyl-CoA = a 4-saturated (2E)-enoyl-CoA. It catalyses the reaction a (3E)-enoyl-CoA = a 4-saturated (2E)-enoyl-CoA. The protein operates within lipid metabolism; fatty acid beta-oxidation. Its function is as follows. Involved in the aerobic and anaerobic degradation of long-chain fatty acids via beta-oxidation cycle. Catalyzes the formation of 3-oxoacyl-CoA from enoyl-CoA via L-3-hydroxyacyl-CoA. It can also use D-3-hydroxyacyl-CoA and cis-3-enoyl-CoA as substrate. The polypeptide is Fatty acid oxidation complex subunit alpha (Citrobacter koseri (strain ATCC BAA-895 / CDC 4225-83 / SGSC4696)).